A 181-amino-acid chain; its full sequence is Inner membrane-spanning protein YciB (181 aa).

The next 5 helical transmembrane spans lie at 8 to 28 (FPIICFFVAYKFWGIYIATAA), 53 to 73 (ITLIFILLLGSFTLVFHNAIF), 76 to 96 (WKPTIVYWIFAIVLFGSHFFG), 121 to 141 (LSWALFFLILGVLNLFVVYNF), and 149 to 169 (FKLFGTLALMLVFILGQAFYI).

This sequence belongs to the YciB family.

The protein resides in the cell inner membrane. Plays a role in cell envelope biogenesis, maintenance of cell envelope integrity and membrane homeostasis. This Coxiella burnetii (strain CbuK_Q154) (Coxiella burnetii (strain Q154)) protein is Inner membrane-spanning protein YciB.